Reading from the N-terminus, the 62-residue chain is Large ribosomal subunit protein bL28 (62 aa).

The protein belongs to the bacterial ribosomal protein bL28 family.

This chain is Large ribosomal subunit protein bL28, found in Helicobacter pylori (strain Shi470).